Here is a 281-residue protein sequence, read N- to C-terminus: NADH--cytochrome b5 reductase 1 (281 aa).

The chain crosses the membrane as a helical span at residues 13–33 (ILLGVFVAFVAVGAGAAYFLT). Positions 34-40 (SSKKRRV) match the AKR2A-binding sequence (ABS) required for mitochondrion outer membrane targeting motif. Residues 45–149 (ENFKEFKLVK…KGPKGRFKYQ (105 aa)) enclose the FAD-binding FR-type domain. FAD contacts are provided by residues 129 to 144 (REMR…GPKG) and 155 to 187 (AFGM…KVHL). At T166 the chain carries Phosphothreonine.

The protein belongs to the flavoprotein pyridine nucleotide cytochrome reductase family. As to quaternary structure, monomer. Interacts with AKR2A. Requires FAD as cofactor. In terms of tissue distribution, expressed in roots, stems, flowers and siliques. Detected in leaves.

Its subcellular location is the mitochondrion outer membrane. The catalysed reaction is 2 Fe(III)-[cytochrome b5] + NADH = 2 Fe(II)-[cytochrome b5] + NAD(+) + H(+). In terms of biological role, reductase transferring electrons from NADH to cytochrome b5. Required for the NADH-dependent electron transfer involved in the desaturation and hydroxylation of fatty acids and in the desaturation of sterol precursors. No activity with NADPH as electron donor. The sequence is that of NADH--cytochrome b5 reductase 1 from Arabidopsis thaliana (Mouse-ear cress).